We begin with the raw amino-acid sequence, 127 residues long: Glycine cleavage system H protein (127 aa).

The region spanning 22 to 104 (EVVIGITHFA…YEGAWMVKVE (83 aa)) is the Lipoyl-binding domain. Lys-63 is modified (N6-lipoyllysine).

Belongs to the GcvH family. In terms of assembly, the glycine cleavage system is composed of four proteins: P, T, L and H. (R)-lipoate serves as cofactor.

The glycine cleavage system catalyzes the degradation of glycine. The H protein shuttles the methylamine group of glycine from the P protein to the T protein. Its function is as follows. Is also involved in protein lipoylation via its role as an octanoyl/lipoyl carrier protein intermediate. This chain is Glycine cleavage system H protein, found in Bacillus cereus (strain ZK / E33L).